The chain runs to 230 residues: Ribosomal RNA small subunit methyltransferase G (230 aa).

Residues Gly-93, Leu-98, 144 to 145 (IE), and Arg-158 contribute to the S-adenosyl-L-methionine site.

It belongs to the methyltransferase superfamily. RNA methyltransferase RsmG family.

Its subcellular location is the cytoplasm. The enzyme catalyses guanosine(527) in 16S rRNA + S-adenosyl-L-methionine = N(7)-methylguanosine(527) in 16S rRNA + S-adenosyl-L-homocysteine. Specifically methylates the N7 position of guanine in position 527 of 16S rRNA. This Bordetella parapertussis (strain 12822 / ATCC BAA-587 / NCTC 13253) protein is Ribosomal RNA small subunit methyltransferase G.